Consider the following 586-residue polypeptide: MFS-type transporter ucsD (586 aa).

Residues 1–56 (MSRNSGTTLEDGPLHADPTTEAPNNATVTTNVTANDENTEKEVDADAAAAAPAEAP) form a disordered region. Composition is skewed to low complexity over residues 19-36 (TTEAPNNATVTTNVTAND) and 46-56 (DAAAAAPAEAP). N-linked (GlcNAc...) asparagine glycans are attached at residues N25 and N31. A run of 8 helical transmembrane segments spans residues 65-85 (WAIVAALAFTALLSSLEGTII), 101-121 (SFIWVPNGYFLATIVMLPLMA), 131-151 (WLTLISVATFTLGSGICGGAN), 164-184 (GFGGGGIALMINIILTDLVPL), 192-212 (GIVQMVSAVGAALGPFLGGLL), 220-240 (WVFYINLPIGGTSLVALFFFL), 263-283 (AIFIASTVSVLIGVTWGGAVY), and 290-310 (VIVPLVLGFFGLGLFVVYEWT). N-linked (GlcNAc...) asparagine glycosylation is present at N324. 6 helical membrane-spanning segments follow: residues 330 to 350 (VLGVTFLHTVATYWSFYFMPI), 368 to 388 (LPLFAGIFPFAILGGMLLAKF), 393 to 413 (PMHLIGMAIITLSFGLFSLLD), 420 to 440 (AWACFQLLFAVGAGLMIAILL), 458 to 478 (VWTFVRGFGTVWGVTIPSAIF), and 532 to 552 (LRTVWYVGVALAGFGWLLIWL).

It belongs to the major facilitator superfamily.

It is found in the membrane. In terms of biological role, MFS-type transporter; part of the gene cluster that mediates the biosynthesis of UCS1025A, a member of the pyrrolizidinone family that acts as a strong telomerase inhibitor and displays potent antibacterial and antitumor properties. These compounds share a hemiaminal-containing pyrrolizidinone core fused with a gamma-lactone, giving a furopyrrolizidine that is connected to a decalin fragment. The polypeptide is MFS-type transporter ucsD (Acremonium sp).